We begin with the raw amino-acid sequence, 558 residues long: Dihydroxy-acid dehydratase (558 aa).

Asp-81 contacts Mg(2+). Cys-122 provides a ligand contact to [2Fe-2S] cluster. The Mg(2+) site is built by Asp-123 and Lys-124. At Lys-124 the chain carries N6-carboxylysine. A [2Fe-2S] cluster-binding site is contributed by Cys-195. Residue Glu-447 coordinates Mg(2+). Ser-473 acts as the Proton acceptor in catalysis.

Belongs to the IlvD/Edd family. Homodimer. The cofactor is [2Fe-2S] cluster. Mg(2+) serves as cofactor.

The catalysed reaction is (2R)-2,3-dihydroxy-3-methylbutanoate = 3-methyl-2-oxobutanoate + H2O. It catalyses the reaction (2R,3R)-2,3-dihydroxy-3-methylpentanoate = (S)-3-methyl-2-oxopentanoate + H2O. The protein operates within amino-acid biosynthesis; L-isoleucine biosynthesis; L-isoleucine from 2-oxobutanoate: step 3/4. Its pathway is amino-acid biosynthesis; L-valine biosynthesis; L-valine from pyruvate: step 3/4. Functions in the biosynthesis of branched-chain amino acids. Catalyzes the dehydration of (2R,3R)-2,3-dihydroxy-3-methylpentanoate (2,3-dihydroxy-3-methylvalerate) into 2-oxo-3-methylpentanoate (2-oxo-3-methylvalerate) and of (2R)-2,3-dihydroxy-3-methylbutanoate (2,3-dihydroxyisovalerate) into 2-oxo-3-methylbutanoate (2-oxoisovalerate), the penultimate precursor to L-isoleucine and L-valine, respectively. In Bacillus pumilus (strain SAFR-032), this protein is Dihydroxy-acid dehydratase.